The sequence spans 307 residues: Ornithine carbamoyltransferase (307 aa).

Residues 54–57 (STRT), Gln81, Arg105, and 132–135 (HPCQ) each bind carbamoyl phosphate. L-ornithine contacts are provided by residues Asn163, Asp221, and 225–226 (SM). Carbamoyl phosphate is bound by residues 261–262 (CL) and Arg289.

Belongs to the aspartate/ornithine carbamoyltransferase superfamily. OTCase family.

It localises to the cytoplasm. It catalyses the reaction carbamoyl phosphate + L-ornithine = L-citrulline + phosphate + H(+). It participates in amino-acid biosynthesis; L-arginine biosynthesis; L-arginine from L-ornithine and carbamoyl phosphate: step 1/3. Reversibly catalyzes the transfer of the carbamoyl group from carbamoyl phosphate (CP) to the N(epsilon) atom of ornithine (ORN) to produce L-citrulline. The protein is Ornithine carbamoyltransferase of Aromatoleum aromaticum (strain DSM 19018 / LMG 30748 / EbN1) (Azoarcus sp. (strain EbN1)).